A 162-amino-acid polypeptide reads, in one-letter code: UPF0114 protein Sputw3181_3501 (162 aa).

3 consecutive transmembrane segments (helical) span residues Ile15 to Phe35, Leu53 to Val73, and Ile136 to Leu156.

The protein belongs to the UPF0114 family.

It is found in the cell membrane. The sequence is that of UPF0114 protein Sputw3181_3501 from Shewanella sp. (strain W3-18-1).